Consider the following 89-residue polypeptide: Small ribosomal subunit protein uS15 (89 aa).

Residues Met1–Gly23 form a disordered region. Over residues Asn10–Gly23 the composition is skewed to polar residues.

It belongs to the universal ribosomal protein uS15 family. In terms of assembly, part of the 30S ribosomal subunit. Forms a bridge to the 50S subunit in the 70S ribosome, contacting the 23S rRNA.

Functionally, one of the primary rRNA binding proteins, it binds directly to 16S rRNA where it helps nucleate assembly of the platform of the 30S subunit by binding and bridging several RNA helices of the 16S rRNA. Its function is as follows. Forms an intersubunit bridge (bridge B4) with the 23S rRNA of the 50S subunit in the ribosome. This Prochlorococcus marinus (strain NATL2A) protein is Small ribosomal subunit protein uS15.